A 104-amino-acid polypeptide reads, in one-letter code: ESAT-6-like protein (104 aa).

A coiled-coil region spans residues 12-43 (MAQAAQDIEQSANAIRGMQNQLASAKDQLRSH).

It belongs to the WXG100 family. CFP-10 subfamily. In terms of assembly, in isolation forms a homodimer. Forms a tight 1:1 complex with EsxA. Forms a complex with EsxA and EccC, probably wholly mediated by EsxB; binds in a pocket in the third FtsK (ATPase) domain of EccC (residues 1163-1208).

It localises to the secreted. Its function is as follows. May help regulate assembly and function of the type VII secretion system (T7SS). Binds to EccC and induces its multimerization. May serve as a chaperone for EsxA. This chain is ESAT-6-like protein, found in Thermomonospora curvata (strain ATCC 19995 / DSM 43183 / JCM 3096 / KCTC 9072 / NBRC 15933 / NCIMB 10081 / Henssen B9).